The sequence spans 433 residues: Protein arginine N-methyltransferase 2 (433 aa).

The disordered stretch occupies residues 1-27 (MSTSGCSSEKSDFQDSTEGEEEEDTQS). Residues 15 to 26 (DSTEGEEEEDTQ) are compositionally biased toward acidic residues. In terms of domain architecture, SH3 spans 30–89 (LCMREYVVIRDYMAADATQLSLCFGDKVLLLSAVTQDWWWVKHNGICGYVPASYLHDALN). An SAM-dependent MTase PRMT-type domain is found at 102 to 416 (DEEYYGSYKT…MSVTLSWVIN (315 aa)). 5 residues coordinate S-adenosyl-L-methionine: His-115, Arg-124, Gly-148, Glu-171, and Glu-200. Residues Glu-214 and Glu-223 contribute to the active site.

It belongs to the class I-like SAM-binding methyltransferase superfamily. Protein arginine N-methyltransferase family. As to quaternary structure, interacts with ctnnb1.

It is found in the cytoplasm. The protein resides in the nucleus. It carries out the reaction L-arginyl-[protein] + 2 S-adenosyl-L-methionine = N(omega),N(omega)-dimethyl-L-arginyl-[protein] + 2 S-adenosyl-L-homocysteine + 2 H(+). Arginine methyltransferase that methylates the guanidino nitrogens of arginyl residues in proteins such as histones. Involved in growth regulation. Involved in embryonic dorsal development. The protein is Protein arginine N-methyltransferase 2 (prmt2) of Xenopus tropicalis (Western clawed frog).